A 480-amino-acid chain; its full sequence is tRNA-2-methylthio-N(6)-dimethylallyladenosine synthase (480 aa).

Residues 29-145 form the MTTase N-terminal domain; sequence GSFWIQTFGC…LEALLTQVDN (117 aa). [4Fe-4S] cluster-binding residues include Cys38, Cys74, Cys108, Cys180, Cys184, and Cys187. Positions 166 to 403 constitute a Radical SAM core domain; that stretch reads RDSTICAWVN…NALVERIALQ (238 aa). The TRAM domain maps to 406–474; the sequence is SRYSGKVEQV…AFSLSGTPCE (69 aa).

The protein belongs to the methylthiotransferase family. MiaB subfamily. In terms of assembly, monomer. Requires [4Fe-4S] cluster as cofactor.

The protein resides in the cytoplasm. The enzyme catalyses N(6)-dimethylallyladenosine(37) in tRNA + (sulfur carrier)-SH + AH2 + 2 S-adenosyl-L-methionine = 2-methylsulfanyl-N(6)-dimethylallyladenosine(37) in tRNA + (sulfur carrier)-H + 5'-deoxyadenosine + L-methionine + A + S-adenosyl-L-homocysteine + 2 H(+). Catalyzes the methylthiolation of N6-(dimethylallyl)adenosine (i(6)A), leading to the formation of 2-methylthio-N6-(dimethylallyl)adenosine (ms(2)i(6)A) at position 37 in tRNAs that read codons beginning with uridine. This chain is tRNA-2-methylthio-N(6)-dimethylallyladenosine synthase, found in Prochlorococcus marinus (strain MIT 9313).